Consider the following 531-residue polypeptide: Histone-arginine methyltransferase CARMER (531 aa).

In terms of domain architecture, SAM-dependent MTase PRMT-type spans 141–450 (ASQYFQFYGY…QSYDVTIDLH (310 aa)). Glutamine 154, arginine 163, glycine 187, glutamate 209, glutamate 238, and threonine 266 together coordinate S-adenosyl-L-methionine. Arginine 501 carries the asymmetric dimethylarginine; by autocatalysis modification.

The protein belongs to the class I-like SAM-binding methyltransferase superfamily. Protein arginine N-methyltransferase family. In terms of assembly, homodimer. In terms of processing, the dimethylated protein is the major form.

The protein resides in the cytoplasm. Its subcellular location is the nucleus. It catalyses the reaction L-arginyl-[protein] + 2 S-adenosyl-L-methionine = N(omega),N(omega)-dimethyl-L-arginyl-[protein] + 2 S-adenosyl-L-homocysteine + 2 H(+). Its function is as follows. Methylates (mono- and asymmetric dimethylation) the guanidino nitrogens of arginyl residues in proteins. May methylate histone H3 at 'Arg-17' and activate transcription via chromatin remodeling. The sequence is that of Histone-arginine methyltransferase CARMER (Art4) from Drosophila ananassae (Fruit fly).